The sequence spans 377 residues: N-acetyldiaminopimelate deacetylase (377 aa).

The active site involves Asp70. The active-site Proton acceptor is the Glu129.

This sequence belongs to the peptidase M20A family. N-acetyldiaminopimelate deacetylase subfamily.

The enzyme catalyses N-acetyl-(2S,6S)-2,6-diaminopimelate + H2O = (2S,6S)-2,6-diaminopimelate + acetate. It participates in amino-acid biosynthesis; L-lysine biosynthesis via DAP pathway; LL-2,6-diaminopimelate from (S)-tetrahydrodipicolinate (acetylase route): step 3/3. In terms of biological role, catalyzes the conversion of N-acetyl-diaminopimelate to diaminopimelate and acetate. In Geobacillus thermodenitrificans (strain NG80-2), this protein is N-acetyldiaminopimelate deacetylase.